Here is a 208-residue protein sequence, read N- to C-terminus: Glycerol-3-phosphate acyltransferase (208 aa).

Helical transmembrane passes span 3–23, 51–71, 78–98, 115–135, and 140–160; these read ILLA…VVVS, KAAI…VWLA, DVAI…PVFF, AVHP…AFFF, and LAAL…FGMP.

It belongs to the PlsY family. In terms of assembly, probably interacts with PlsX.

It localises to the cell inner membrane. The enzyme catalyses an acyl phosphate + sn-glycerol 3-phosphate = a 1-acyl-sn-glycero-3-phosphate + phosphate. The protein operates within lipid metabolism; phospholipid metabolism. Functionally, catalyzes the transfer of an acyl group from acyl-phosphate (acyl-PO(4)) to glycerol-3-phosphate (G3P) to form lysophosphatidic acid (LPA). This enzyme utilizes acyl-phosphate as fatty acyl donor, but not acyl-CoA or acyl-ACP. This is Glycerol-3-phosphate acyltransferase from Burkholderia orbicola (strain MC0-3).